The following is a 538-amino-acid chain: Chaperonin GroEL (538 aa).

ATP-binding positions include 29 to 32 (TLGP), 86 to 90 (DGTTT), G413, 479 to 481 (DAL), and D495.

This sequence belongs to the chaperonin (HSP60) family. In terms of assembly, forms a cylinder of 14 subunits composed of two heptameric rings stacked back-to-back. Interacts with the co-chaperonin GroES.

It is found in the cytoplasm. The enzyme catalyses ATP + H2O + a folded polypeptide = ADP + phosphate + an unfolded polypeptide.. Its function is as follows. Together with its co-chaperonin GroES, plays an essential role in assisting protein folding. The GroEL-GroES system forms a nano-cage that allows encapsulation of the non-native substrate proteins and provides a physical environment optimized to promote and accelerate protein folding. This Thermotoga maritima (strain ATCC 43589 / DSM 3109 / JCM 10099 / NBRC 100826 / MSB8) protein is Chaperonin GroEL.